The primary structure comprises 723 residues: MSMASSSLATQSFFSSFPLSHRLHFPVPYLLLRSSFFRKPLSLSATSPSSSSSSPSIFLSCFDDALPDKIQQPENSTINSEESECEEEDDEEGDDFTDPILKFFKSRTLTSESTADPARESKFSLQKNRRTSWHLAPDFADPETEIESKPEESVFVTNQQTLGVHIPFESGVAREILELAKNLKENQTLGEMLSGFERRVSDTECVEALVMMGESGFVKSCLYFYEWMSLQEPSLASPRACSVLFTLLGRERMADYILLLLSNLPDKEEFRDVRLYNAAISGLSASQRYDDAWEVYEAMDKINVYPDNVTCAILITTLRKAGRSAKEVWEIFEKMSEKGVKWSQDVFGGLVKSFCDEGLKEEALVIQTEMEKKGIRSNTIVYNTLMDAYNKSNHIEEVEGLFTEMRDKGLKPSAATYNILMDAYARRMQPDIVETLLREMEDLGLEPNVKSYTCLISAYGRTKKMSDMAADAFLRMKKVGLKPSSHSYTALIHAYSVSGWHEKAYASFEEMCKEGIKPSVETYTSVLDAFRRSGDTGKLMEIWKLMLREKIKGTRITYNTLLDGFAKQGLYIEARDVVSEFSKMGLQPSVMTYNMLMNAYARGGQDAKLPQLLKEMAALNLKPDSITYSTMIYAFVRVRDFKRAFFYHKMMVKSGQVPDPRSYEKLRAILEDKAKTKNRKDKTAILGIINSKFGRVKAKTKGKKDEFWKYKTNRTTSPGRHRS.

A chloroplast-targeting transit peptide spans 1–44; sequence MSMASSSLATQSFFSSFPLSHRLHFPVPYLLLRSSFFRKPLSLS. The tract at residues 70–97 is disordered; that stretch reads IQQPENSTINSEESECEEEDDEEGDDFT. Positions 81–97 are enriched in acidic residues; the sequence is EESECEEEDDEEGDDFT. 11 PPR repeats span residues 272 to 306, 307 to 342, 343 to 377, 378 to 412, 413 to 447, 448 to 483, 484 to 518, 519 to 553, 554 to 588, 589 to 623, and 624 to 658; these read DVRL…NVYP, DNVT…GVKW, SQDV…GIRS, NTIV…GLKP, SAAT…GLEP, NVKS…GLKP, SSHS…GIKP, SVET…KIKG, TRIT…GLQP, SVMT…NLKP, and DSIT…GQVP. Residues 700-723 form a disordered region; that stretch reads TKGKKDEFWKYKTNRTTSPGRHRS. Residues 713–723 show a composition bias toward polar residues; the sequence is NRTTSPGRHRS.

Belongs to the PPR family. P subfamily.

The protein resides in the plastid. Its subcellular location is the chloroplast. The polypeptide is Pentatricopeptide repeat-containing protein At5g50280, chloroplastic (EMB1006) (Arabidopsis thaliana (Mouse-ear cress)).